Consider the following 120-residue polypeptide: Putative 15 kDa capsid protein (120 aa).

It is found in the virion. The polypeptide is Putative 15 kDa capsid protein (P15) (Orgyia pseudotsugata (Douglas-fir tussock moth)).